Consider the following 368-residue polypeptide: MSAFQPTIKRRESTKIYVGNVPIGGDAPIAVQSMTNTRTTDVEATVAQIKSLERVGADIVRVSVPTMDAAEAFKQIKQQVNVPLVADIHFDYRIALKVAEYGVDCLRINPGNIGREDRVRAVVDCAQDKNIPIRIGVNAGSLEKDLQEKYGEPTPEALLESALRHVEILDRLNFDQFKVSVKASDVFLAVESYRLLAKAIKQPLHLGITEAGGARAGAVKSAVGLGMLLAEGIGDTLRISLAADPIEEIKVGFDILKSLRIRSRGINFIACPTCSRQEFDVIGTVNALEQRLEDIITPMDVSIIGCVVNGPGEALISDLGVTGGNKKSGYYLDGERQKERFDNEDIVNQLEAKIRAKVARQDPKNRII.

Residues C271, C274, C306, and E313 each contribute to the [4Fe-4S] cluster site.

This sequence belongs to the IspG family. The cofactor is [4Fe-4S] cluster.

It carries out the reaction (2E)-4-hydroxy-3-methylbut-2-enyl diphosphate + oxidized [flavodoxin] + H2O + 2 H(+) = 2-C-methyl-D-erythritol 2,4-cyclic diphosphate + reduced [flavodoxin]. The protein operates within isoprenoid biosynthesis; isopentenyl diphosphate biosynthesis via DXP pathway; isopentenyl diphosphate from 1-deoxy-D-xylulose 5-phosphate: step 5/6. Functionally, converts 2C-methyl-D-erythritol 2,4-cyclodiphosphate (ME-2,4cPP) into 1-hydroxy-2-methyl-2-(E)-butenyl 4-diphosphate. The sequence is that of 4-hydroxy-3-methylbut-2-en-1-yl diphosphate synthase (flavodoxin) from Haemophilus influenzae (strain 86-028NP).